The sequence spans 257 residues: Acetylglutamate kinase (257 aa).

Substrate is bound by residues 41–42, Arg-63, and Asn-158; that span reads GG.

The protein belongs to the acetylglutamate kinase family. ArgB subfamily.

Its subcellular location is the cytoplasm. The enzyme catalyses N-acetyl-L-glutamate + ATP = N-acetyl-L-glutamyl 5-phosphate + ADP. The protein operates within amino-acid biosynthesis; L-arginine biosynthesis; N(2)-acetyl-L-ornithine from L-glutamate: step 2/4. Catalyzes the ATP-dependent phosphorylation of N-acetyl-L-glutamate. This is Acetylglutamate kinase from Bacteroides thetaiotaomicron (strain ATCC 29148 / DSM 2079 / JCM 5827 / CCUG 10774 / NCTC 10582 / VPI-5482 / E50).